A 59-amino-acid chain; its full sequence is Large ribosomal subunit protein bL32 (59 aa).

Positions 1 to 59 (MAVQQNRKTRSKRGMRRSHDALSAAALSTDATTGEVHRRHHVSPDGFYRGKQVVEARDE) are disordered. Basic residues predominate over residues 7-16 (RKTRSKRGMR). Residues 21–33 (ALSAAALSTDATT) are compositionally biased toward low complexity.

The protein belongs to the bacterial ribosomal protein bL32 family.

The sequence is that of Large ribosomal subunit protein bL32 from Marinobacter nauticus (strain ATCC 700491 / DSM 11845 / VT8) (Marinobacter aquaeolei).